The sequence spans 295 residues: Light-independent protochlorophyllide reductase iron-sulfur ATP-binding protein (295 aa).

ATP-binding positions include 39–44 and Lys68; that span reads GIGKST. Residue Ser43 coordinates Mg(2+). [4Fe-4S] cluster-binding residues include Cys124 and Cys158. ATP is bound by residues 209-210 and 233-235; these read NR and PDL.

The protein belongs to the NifH/BchL/ChlL family. Homodimer. Protochlorophyllide reductase is composed of three subunits; BchL, BchN and BchB. [4Fe-4S] cluster serves as cofactor.

The catalysed reaction is chlorophyllide a + oxidized 2[4Fe-4S]-[ferredoxin] + 2 ADP + 2 phosphate = protochlorophyllide a + reduced 2[4Fe-4S]-[ferredoxin] + 2 ATP + 2 H2O. It functions in the pathway porphyrin-containing compound metabolism; bacteriochlorophyll biosynthesis (light-independent). Its function is as follows. Component of the dark-operative protochlorophyllide reductase (DPOR) that uses Mg-ATP and reduced ferredoxin to reduce ring D of protochlorophyllide (Pchlide) to form chlorophyllide a (Chlide). This reaction is light-independent. The L component serves as a unique electron donor to the NB-component of the complex, and binds Mg-ATP. This chain is Light-independent protochlorophyllide reductase iron-sulfur ATP-binding protein, found in Rhodospirillum rubrum (strain ATCC 11170 / ATH 1.1.1 / DSM 467 / LMG 4362 / NCIMB 8255 / S1).